Consider the following 442-residue polypeptide: tRNA-2-methylthio-N(6)-dimethylallyladenosine synthase (442 aa).

The region spanning 3-120 (NKLYIRTFGC…LPNMLNDALN (118 aa)) is the MTTase N-terminal domain. Residues C12, C49, C83, C157, C161, and C164 each coordinate [4Fe-4S] cluster. The region spanning 143-375 (RTNSVTAFVS…QKTINNNTEH (233 aa)) is the Radical SAM core domain. Positions 378-440 (QLMIGSIQKV…GNSLMGDLLT (63 aa)) constitute a TRAM domain.

This sequence belongs to the methylthiotransferase family. MiaB subfamily. As to quaternary structure, monomer. It depends on [4Fe-4S] cluster as a cofactor.

It is found in the cytoplasm. It carries out the reaction N(6)-dimethylallyladenosine(37) in tRNA + (sulfur carrier)-SH + AH2 + 2 S-adenosyl-L-methionine = 2-methylsulfanyl-N(6)-dimethylallyladenosine(37) in tRNA + (sulfur carrier)-H + 5'-deoxyadenosine + L-methionine + A + S-adenosyl-L-homocysteine + 2 H(+). Its function is as follows. Catalyzes the methylthiolation of N6-(dimethylallyl)adenosine (i(6)A), leading to the formation of 2-methylthio-N6-(dimethylallyl)adenosine (ms(2)i(6)A) at position 37 in tRNAs that read codons beginning with uridine. This Vesicomyosocius okutanii subsp. Calyptogena okutanii (strain HA) protein is tRNA-2-methylthio-N(6)-dimethylallyladenosine synthase.